We begin with the raw amino-acid sequence, 624 residues long: Forkhead box protein O1 (624 aa).

Disordered stretches follow at residues 1–62 (MAEA…PSAS) and 94–128 (APLS…SRRN). Thr-24 is subject to Phosphothreonine; by PKB/AKT1 or PKB/AKT2 and SGK1. 2 stretches are compositionally biased toward low complexity: residues 37–62 (SATS…PSAS) and 105–119 (AAAA…AGQP). Residues 130 to 224 (WGNLSYADLI…KSGKSPRRRA (95 aa)) constitute a DNA-binding region (fork-head). DNA-binding regions lie at residues 181-188 (NSIRHNLS) and 204-207 (SSWW). A Phosphoserine; by STK4/MST1 modification is found at Ser-182. Phosphoserine occurs at positions 188, 204, and 205. The segment at 204–306 (SSWWMLNPEG…RLSPIMTEQD (103 aa)) is disordered. N6-acetyllysine occurs at positions 215 and 218. Residue Ser-219 is modified to Phosphoserine; by CDK1. Omega-N-methylarginine; by PRMT1 occurs at positions 221 and 223. The Nuclear localization signal signature appears at 221 to 223 (RRR). Ser-226 is subject to Phosphoserine; by PKB/AKT1 and SGK1. Residues Lys-232, Lys-235, and Lys-244 each carry the N6-acetyllysine modification. The span at 234 to 245 (AKSRGRAAKKKA) shows a compositional bias: basic residues. The segment at 253–532 (GAGDSPGSQF…RLAPVKTALQ (280 aa)) is sufficient for interaction with NLK. Phosphoserine is present on residues Ser-257 and Ser-268. The span at 279-296 (NWSTFRPRTSSNASTISG) shows a compositional bias: polar residues. Ser-289 is subject to Phosphoserine; by PKB/AKT1. The residue at position 292 (Ser-292) is a Phosphoserine; by CK1 and SGK1. Phosphoserine; by CK1 is present on Ser-295. Ser-299 is subject to Phosphoserine; by DYRK1A. Thr-303 carries the phosphothreonine modification. A required for interaction with RUNX2 region spans residues 333 to 428 (SEISNPENME…YGGMSQYCAP (96 aa)). Lys-393 carries the N6-acetyllysine modification. A Required for interaction with SIRT1 motif is present at residues 431–435 (LKELL).

Interacts with LRPPRC. Interacts with RUNX2; the interaction inhibits RUNX2 transcriptional activity and mediates the IGF1/insulin-dependent BGLAP expression in osteoblasts Interacts with PPP2R1A; the interaction regulates the dephosphorylation of FOXO1 at Thr-24 and Ser-263 leading to its nuclear import. Interacts with NLK. Interacts with SIRT1; the interaction results in the deacetylation of FOXO1 leading to activation of FOXO1-mediated transcription of genes involved in DNA repair and stress resistance. Binds to CDK1. Interacts with the 14-3-3 proteins, YWHAG and YWHAZ; the interactions require insulin-stimulated phosphorylation on Thr-24, promote nuclear exit and loss of transcriptional activity. Interacts with SKP2; the interaction ubiquitinates FOXO1 leading to its proteasomal degradation. The interaction requires the presence of KRIT1. Interacts (via the C-terminal half) with ATF4 (via its DNA binding domain); the interaction occurs in osteoblasts, regulates glucose homeostasis via suppression of beta-cell proliferation and subsequent decrease in insulin production. Interacts with PRMT1; the interaction methylates FOXO1, prevents PKB/AKT1 phosphorylation and retains FOXO1 in the nucleus. Interacts with EP300 and CREBBP; the interactions acetylate FOXO1. Interacts with SIRT2; the interaction is disrupted in response to oxidative stress or serum deprivation, leading to increased level of acetylated FOXO1, which promotes stress-induced autophagy by stimulating E1-like activating enzyme ATG7. Interacts (acetylated form) with ATG7; the interaction is increased in response to oxidative stress or serum deprivation and promotes the autophagic process leading to cell death. Interacts (acetylated form) with PPARG. Interacts with XBP1; this interaction is direct and leads to FOXO1 ubiquitination and degradation via the proteasome pathway. Interacts (via the Fork-head domain) with CEBPA; the interaction increases when FOXO1 is deacetylated. Interacts with WDFY2. Forms a complex with WDFY2 and AKT1. Interacts with CRY1. Interacts with PPIA/CYPA; the interaction promotes FOXO1 dephosphorylation, nuclear accumulation and transcriptional activity. Interacts with TOX4; FOXO1 is required for full induction of TOX4-dependent activity and the interaction is inhibited by insulin. Interacts (when phosphorylated on Ser-226) with STUB1/CHIP. Post-translationally, phosphorylation by NLK promotes nuclear export and inhibits the transcriptional activity. In response to growth factors, phosphorylation on Thr-24, Ser-226 and Ser-292 by PKB/AKT1 promotes nuclear export and inactivation of transactivational activity. Phosphorylation on Thr-24 is required for binding 14-3-3 proteins. Phosphorylation of Ser-226 decreases DNA-binding activity and promotes the phosphorylation of Thr-24 and Ser-289, permitting phosphorylation of Ser-292 and Ser-295, probably by CDK1, leading to nuclear exclusion and loss of function. Stress signals, such as response to oxygen or nitric oxide, attenuate the PKB/AKT1-mediated phosphorylation leading to nuclear retention. Phosphorylation of Ser-299 is independent of IGF1 and leads to reduced function. Dephosphorylated on Thr-24 and Ser-226 by PP2A in beta-cells under oxidative stress leading to nuclear retention. Phosphorylation of Ser-219 by CDK1 disrupts binding of 14-3-3 proteins leading to nuclear accumulation and has no effect on DNA binding nor transcriptional activity. Phosphorylation by STK4/MST1 on Ser-182, upon oxidative stress, inhibits binding to 14-3-3 proteins and nuclear export. PPIA/CYPA promotes its dephosphorylation on Ser-226. In terms of processing, ubiquitinated by SKP2. Ubiquitination leads to proteasomal degradation. Ubiquitinated by STUB1/CHIP; when Ser-226 is phosphorylated. Methylation inhibits AKT1-mediated phosphorylation at Ser-226 and is increased by oxidative stress. Post-translationally, acetylated. Acetylation at Lys-232 and Lys-244 are necessary for autophagic cell death induction. Deacetylated by SIRT2 in response to oxidative stress or serum deprivation, thereby negatively regulating FOXO1-mediated autophagic cell death. Once in the nucleus, acetylated by CREBBP/EP300. Acetylation diminishes the interaction with target DNA and attenuates the transcriptional activity. It increases the phosphorylation at Ser-226. Deacetylation by SIRT1 results in reactivation of the transcriptional activity. Oxidative stress by hydrogen peroxide treatment appears to promote deacetylation and uncoupling of insulin-induced phosphorylation. By contrast, resveratrol acts independently of acetylation. Acetylated at Lys-393, promoting its localization to the nucleus and transcription factor activity. Deacetylation at Lys-393 by SIRT6, promotes its translocation into the cytoplasm, preventing its transcription factor activity. Deacetylation and subsequent inhibition by SIRT6 has different effects depending on cell types: it inhibits gluconeogenesis in hepatocytes, promotes glucose sensing in pancreatic beta-cells and regulates lipid catabolism in brown adipocytes.

It localises to the cytoplasm. The protein localises to the nucleus. Functionally, transcription factor that is the main target of insulin signaling and regulates metabolic homeostasis in response to oxidative stress. Binds to the insulin response element (IRE) with consensus sequence 5'-TT[G/A]TTTTG-3' and the related Daf-16 family binding element (DBE) with consensus sequence 5'-TT[G/A]TTTAC-3'. Activity suppressed by insulin. Main regulator of redox balance and osteoblast numbers and controls bone mass. Orchestrates the endocrine function of the skeleton in regulating glucose metabolism. Also acts as a key regulator of chondrogenic commitment of skeletal progenitor cells in response to lipid availability: when lipids levels are low, translocates to the nucleus and promotes expression of SOX9, which induces chondrogenic commitment and suppresses fatty acid oxidation. Acts synergistically with ATF4 to suppress osteocalcin/BGLAP activity, increasing glucose levels and triggering glucose intolerance and insulin insensitivity. Also suppresses the transcriptional activity of RUNX2, an upstream activator of osteocalcin/BGLAP. Acts as an inhibitor of glucose sensing in pancreatic beta cells by acting as a transcription repressor and suppressing expression of PDX1. In hepatocytes, promotes gluconeogenesis by acting together with PPARGC1A and CEBPA to activate the expression of genes such as IGFBP1, G6PC1 and PCK1. Also promotes gluconeogenesis by directly promoting expression of PPARGC1A and G6PC1. Important regulator of cell death acting downstream of CDK1, PKB/AKT1 and STK4/MST1. Promotes neural cell death. Mediates insulin action on adipose tissue. Regulates the expression of adipogenic genes such as PPARG during preadipocyte differentiation and, adipocyte size and adipose tissue-specific gene expression in response to excessive calorie intake. Regulates the transcriptional activity of GADD45A and repair of nitric oxide-damaged DNA in beta-cells. Required for the autophagic cell death induction in response to starvation or oxidative stress in a transcription-independent manner. Mediates the function of MLIP in cardiomyocytes hypertrophy and cardiac remodeling. Positive regulator of apoptosis in cardiac smooth muscle cells as a result of its transcriptional activation of pro-apoptotic genes. Regulates endothelial cell (EC) viability and apoptosis in a PPIA/CYPA-dependent manner via transcription of CCL2 and BCL2L11 which are involved in EC chemotaxis and apoptosis. The chain is Forkhead box protein O1 (FOXO1) from Bos taurus (Bovine).